Consider the following 188-residue polypeptide: Ubiquitin-conjugating enzyme E2-21 kDa (188 aa).

The UBC core domain maps to serine 3 to alanine 182. Cysteine 119 serves as the catalytic Glycyl thioester intermediate.

Belongs to the ubiquitin-conjugating enzyme family.

The enzyme catalyses S-ubiquitinyl-[E1 ubiquitin-activating enzyme]-L-cysteine + [E2 ubiquitin-conjugating enzyme]-L-cysteine = [E1 ubiquitin-activating enzyme]-L-cysteine + S-ubiquitinyl-[E2 ubiquitin-conjugating enzyme]-L-cysteine.. It functions in the pathway protein modification; protein ubiquitination. In terms of biological role, catalyzes the covalent attachment of ubiquitin to other proteins. Essential for peroxisome biogenesis. Required for UBC4-independent ubiquitination of PEX5. In Pichia angusta (Yeast), this protein is Ubiquitin-conjugating enzyme E2-21 kDa (PEX4).